A 401-amino-acid chain; its full sequence is Nicotinate phosphoribosyltransferase (401 aa).

At His221 the chain carries Phosphohistidine; by autocatalysis.

It belongs to the NAPRTase family. In terms of processing, transiently phosphorylated on a His residue during the reaction cycle. Phosphorylation strongly increases the affinity for substrates and increases the rate of nicotinate D-ribonucleotide production. Dephosphorylation regenerates the low-affinity form of the enzyme, leading to product release.

The catalysed reaction is nicotinate + 5-phospho-alpha-D-ribose 1-diphosphate + ATP + H2O = nicotinate beta-D-ribonucleotide + ADP + phosphate + diphosphate. Its pathway is cofactor biosynthesis; NAD(+) biosynthesis; nicotinate D-ribonucleotide from nicotinate: step 1/1. Functionally, catalyzes the synthesis of beta-nicotinate D-ribonucleotide from nicotinate and 5-phospho-D-ribose 1-phosphate at the expense of ATP. This Yersinia pseudotuberculosis serotype O:1b (strain IP 31758) protein is Nicotinate phosphoribosyltransferase.